A 36-amino-acid chain; its full sequence is Photosystem II reaction center protein M (36 aa).

Residues 5–25 (ILGVIATALFIIIPTSFLLIL) traverse the membrane as a helical segment.

It belongs to the PsbM family. PSII is composed of 1 copy each of membrane proteins PsbA, PsbB, PsbC, PsbD, PsbE, PsbF, PsbH, PsbI, PsbJ, PsbK, PsbL, PsbM, PsbT, PsbX, PsbY, PsbZ, Psb30/Ycf12, at least 3 peripheral proteins of the oxygen-evolving complex and a large number of cofactors. It forms dimeric complexes.

Its subcellular location is the plastid. It is found in the chloroplast thylakoid membrane. Its function is as follows. One of the components of the core complex of photosystem II (PSII). PSII is a light-driven water:plastoquinone oxidoreductase that uses light energy to abstract electrons from H(2)O, generating O(2) and a proton gradient subsequently used for ATP formation. It consists of a core antenna complex that captures photons, and an electron transfer chain that converts photonic excitation into a charge separation. This subunit is found at the monomer-monomer interface. In Chlorella vulgaris (Green alga), this protein is Photosystem II reaction center protein M.